The sequence spans 184 residues: Shikimate kinase (184 aa).

18–23 is an ATP binding site; sequence GAGKTT. Position 22 (T22) interacts with Mg(2+). Residues D40, R64, and G86 each coordinate substrate. R124 lines the ATP pocket. R143 contacts substrate. Q160 lines the ATP pocket.

It belongs to the shikimate kinase family. As to quaternary structure, monomer. Mg(2+) is required as a cofactor.

It localises to the cytoplasm. The enzyme catalyses shikimate + ATP = 3-phosphoshikimate + ADP + H(+). Its pathway is metabolic intermediate biosynthesis; chorismate biosynthesis; chorismate from D-erythrose 4-phosphate and phosphoenolpyruvate: step 5/7. Its function is as follows. Catalyzes the specific phosphorylation of the 3-hydroxyl group of shikimic acid using ATP as a cosubstrate. This Chromobacterium violaceum (strain ATCC 12472 / DSM 30191 / JCM 1249 / CCUG 213 / NBRC 12614 / NCIMB 9131 / NCTC 9757 / MK) protein is Shikimate kinase.